An 897-amino-acid polypeptide reads, in one-letter code: N-terminal acetyltransferase A complex auxiliary subunit NAA15 (897 aa).

TPR repeat units follow at residues 77–110 (HVCW…DPDN), 111–144 (LEIL…KPNH), 189–222 (TEMI…IVDK), 223–256 (LSYK…NPDN), 298–331 (SSAV…KGVP), 380–413 (LWTL…TPTV), and 488–523 (QCMW…YADI). 2 disordered regions span residues 578 to 640 (KSTA…DPHG) and 863 to 897 (SRKS…SVAT). Positions 602–617 (KAEARAKKEAESKSEE) are enriched in basic and acidic residues. The span at 863–872 (SRKSNENGDT) shows a compositional bias: polar residues.

In terms of assembly, part of the NatA complex. Associates with ribosomes. Interacts with NAA10. As to expression, expressed in leaves, roots, shoots and flowers.

Its function is as follows. Auxiliary subunit of the NatA N-alpha-acetyltransferase complex. Required for male gametocyte development, embryogenesis, suspensor development and the formation of the quiescent center (QC) in the root meristem. Involved in plant immunity through the regulation of SNC1 stability. Required for embryo development. The chain is N-terminal acetyltransferase A complex auxiliary subunit NAA15 from Arabidopsis thaliana (Mouse-ear cress).